A 399-amino-acid polypeptide reads, in one-letter code: Phosphoglycerate kinase (399 aa).

Substrate is bound by residues 22–24, arginine 38, 61–64, arginine 120, and arginine 153; these read DFN and HLGR. Residues lysine 204, glutamate 326, and 352–355 contribute to the ATP site; that span reads GGDT.

This sequence belongs to the phosphoglycerate kinase family. As to quaternary structure, monomer.

It is found in the cytoplasm. The catalysed reaction is (2R)-3-phosphoglycerate + ATP = (2R)-3-phospho-glyceroyl phosphate + ADP. Its pathway is carbohydrate degradation; glycolysis; pyruvate from D-glyceraldehyde 3-phosphate: step 2/5. The polypeptide is Phosphoglycerate kinase (Geobacter sp. (strain M21)).